Consider the following 85-residue polypeptide: uncharacterized protein (85 aa).

This is an uncharacterized protein from Shigella flexneri.